The chain runs to 285 residues: Undecaprenyl-diphosphatase (285 aa).

Transmembrane regions (helical) follow at residues 3–23, 41–61, 87–107, 109–129, 197–217, 226–246, and 260–280; these read ILLLVKAAIMGIVEGLTEFLP, GEIVKVFDIAIQTGAMFAVIW, LLIAFVPAVISGLALGGLIKE, LFHPVPVATAFVVGGLIILWV, TEFSFFLGIPTLMGAGAYSLI, GDLPVFAVGVVFAFLSALVCI, and VFAWYRIAFGGLVLLSAWGGW.

It belongs to the UppP family.

The protein localises to the cell inner membrane. The catalysed reaction is di-trans,octa-cis-undecaprenyl diphosphate + H2O = di-trans,octa-cis-undecaprenyl phosphate + phosphate + H(+). Its function is as follows. Catalyzes the dephosphorylation of undecaprenyl diphosphate (UPP). Confers resistance to bacitracin. This chain is Undecaprenyl-diphosphatase, found in Methylibium petroleiphilum (strain ATCC BAA-1232 / LMG 22953 / PM1).